Reading from the N-terminus, the 214-residue chain is Auxin-binding protein ABP20 (214 aa).

A signal peptide spans 1–23; sequence MPQATMIFPILFTFFLLLSSSNA. Cysteine 29 and cysteine 44 are disulfide-bonded. The Cupin type-1 domain occupies 58-204; the sequence is SGLGIAGNTS…TTFLDAAQIK (147 aa). The N-linked (GlcNAc...) asparagine glycan is linked to asparagine 65. Mn(2+)-binding residues include histidine 106, histidine 108, glutamate 113, and histidine 152.

The protein belongs to the germin family. Interacts with ABP19.

It localises to the secreted. The protein localises to the extracellular space. It is found in the apoplast. The protein resides in the cell wall. Its function is as follows. Probable receptor for the plant growth-promoting hormone auxin. In Prunus persica (Peach), this protein is Auxin-binding protein ABP20 (ABP20).